The chain runs to 786 residues: Calcium-independent phospholipase A2-gamma (786 aa).

The N-linked (GlcNAc...) asparagine glycan is linked to asparagine 4. Disordered regions lie at residues 158-180, 225-285, and 321-348; these read KKYS…IIDK, KENS…SLPI, and SKSQ…EEKK. Positions 225–245 are enriched in basic and acidic residues; the sequence is KENSHFQEKSELEGKKVEEGK. 2 stretches are compositionally biased toward polar residues: residues 246 to 258 and 266 to 285; these read SSSL…TSQA and SAGT…SLPI. The PNPLA domain occupies 449 to 644; the sequence is LTIDGGGTRG…LLNNPSALAM (196 aa). The GXGXXG motif lies at 453–458; sequence GGGTRG. The chain crosses the membrane as a helical span at residues 483-503; sequence ICGVSTGAILAFMLGLFHLPL. Positions 485-489 match the GXSXG motif; the sequence is GVSTG. Serine 487 serves as the catalytic Nucleophile. Catalysis depends on aspartate 631, which acts as the Proton acceptor. The DGA/G signature appears at 631-633; sequence DGG. An N6-succinyllysine modification is found at lysine 740.

Expressed in kidney, heart and brain.

The protein localises to the endoplasmic reticulum membrane. It is found in the mitochondrion membrane. The protein resides in the peroxisome membrane. It carries out the reaction a 1,2-diacyl-sn-glycero-3-phosphocholine + H2O = a 1-acyl-sn-glycero-3-phosphocholine + a fatty acid + H(+). It catalyses the reaction a 1,2-diacyl-sn-glycero-3-phosphocholine + H2O = a 2-acyl-sn-glycero-3-phosphocholine + a fatty acid + H(+). The enzyme catalyses a 1,2-diacyl-sn-glycero-3-phosphoethanolamine + H2O = a 1-acyl-sn-glycero-3-phosphoethanolamine + a fatty acid + H(+). The catalysed reaction is a 1-O-(1Z-alkenyl)-2-acyl-sn-glycero-3-phosphocholine + H2O = a 1-O-(1Z-alkenyl)-sn-glycero-3-phosphocholine + a fatty acid + H(+). It carries out the reaction a 1-acyl-sn-glycero-3-phosphocholine + H2O = sn-glycerol 3-phosphocholine + a fatty acid + H(+). It catalyses the reaction 1-acyl-2-(9Z,12Z)-octadecadienoyl-sn-glycero-3-phosphocholine + H2O = a 1-acyl-sn-glycero-3-phosphocholine + (9Z,12Z)-octadecadienoate + H(+). The enzyme catalyses 1-acyl-2-(5Z,8Z,11Z,14Z-eicosatetraenoyl)-sn-glycero-3-phosphocholine + H2O = a 1-acyl-sn-glycero-3-phosphocholine + (5Z,8Z,11Z,14Z)-eicosatetraenoate + H(+). The catalysed reaction is 1-hexadecanoyl-2-(5Z,8Z,11Z,14Z-eicosatetraenoyl)-sn-glycero-3-phosphocholine + H2O = 1-hexadecanoyl-sn-glycero-3-phosphocholine + (5Z,8Z,11Z,14Z)-eicosatetraenoate + H(+). It carries out the reaction 1-octadecanoyl-2-(9Z-octadecenoyl)-sn-glycero-3-phosphocholine + H2O = 1-octadecanoyl-sn-glycero-3-phosphocholine + (9Z)-octadecenoate + H(+). It catalyses the reaction 1-hexadecanoyl-2-(9Z-octadecenoyl)-sn-glycero-3-phosphocholine + H2O = 1-hexadecanoyl-sn-glycero-3-phosphocholine + (9Z)-octadecenoate + H(+). The enzyme catalyses 1-hexadecanoyl-2-(9Z,12Z-octadecadienoyl)-sn-glycero-3-phosphocholine + H2O = (9Z,12Z)-octadecadienoate + 1-hexadecanoyl-sn-glycero-3-phosphocholine + H(+). The catalysed reaction is 1-acyl-2-(9Z,12Z)-octadecadienoyl-sn-glycero-3-phosphoethanolamine + H2O = a 1-acyl-sn-glycero-3-phosphoethanolamine + (9Z,12Z)-octadecadienoate + H(+). It carries out the reaction 1-acyl-2-(5Z,8Z,11Z,14Z)-eicosatetraenoyl-sn-glycero-3-phosphoethanolamine + H2O = a 1-acyl-sn-glycero-3-phosphoethanolamine + (5Z,8Z,11Z,14Z)-eicosatetraenoate + H(+). It catalyses the reaction 1-hexadecanoyl-2-(5Z,8Z,11Z,14Z-eicosatetraenoyl)-sn-glycero-3-phosphoethanolamine + H2O = 1-hexadecanoyl-sn-glycero-3-phosphoethanolamine + (5Z,8Z,11Z,14Z)-eicosatetraenoate + H(+). The enzyme catalyses 1-hexadecanoyl-2-(5Z,8Z,11Z,14Z-eicosatetraenoyl)-sn-glycero-3-phosphocholine + H2O = 2-(5Z,8Z,11Z,14Z)-eicosatetraenoyl-sn-glycero-3-phosphocholine + hexadecanoate + H(+). The catalysed reaction is 1-octadecanoyl-2-(9Z-octadecenoyl)-sn-glycero-3-phosphocholine + H2O = 2-(9Z-octadecenoyl)-sn-glycero-3-phosphocholine + octadecanoate + H(+). It carries out the reaction 1-hexadecanoyl-2-(4Z,7Z,10Z,13Z,16Z,19Z-docosahexaenoyl)-sn-glycero-3-phosphocholine + H2O = 2-(4Z,7Z,10Z,13Z,16Z,19Z-docosahexaenoyl)-sn-glycero-3-phosphocholine + hexadecanoate + H(+). It catalyses the reaction 1-O-(1Z)-hexadecenyl-2 (5Z,8Z,11Z,14Z)-eicosatetraenoyl-sn-glycero-3-phosphocholine + H2O = 1-(1Z-hexadecenyl)-sn-glycero-3-phosphocholine + (5Z,8Z,11Z,14Z)-eicosatetraenoate + H(+). The enzyme catalyses 1-O-(1Z-hexadecenyl)-2-(9Z-octadecenoyl)-sn-glycero-3-phosphocholine + H2O = 1-(1Z-hexadecenyl)-sn-glycero-3-phosphocholine + (9Z)-octadecenoate + H(+). The catalysed reaction is 1-hexadecanoyl-sn-glycero-3-phosphocholine + H2O = sn-glycerol 3-phosphocholine + hexadecanoate + H(+). It carries out the reaction 1',3'-bis-[1,2-di-(9Z,12Z-octadecadienoyl)-sn-glycero-3-phospho]-glycerol + H2O = 1'-[1,2-di-(9Z,12Z-octadecadienoyl)-sn-glycero-3-phospho]-3'-[1-(9Z,12Z-octadecadienoyl)-sn-glycero-3-phospho]-glycerol + (9Z,12Z)-octadecadienoate + H(+). It catalyses the reaction 1'-[1-acyl-2-(9-hydroxy-(10E,12Z)-octadecadienoyl)-sn-glycero-3-phospho]-3'-[1,2-diacyl-sn-glycero-3-phospho]-glycerol + H2O = 9-hydroxy-(10E,12Z)-octadecadienoate + 1'-[1,2-diacyl-sn-glycero-3-phospho],3'-[1-acyl-sn-glycero-3-phospho]-glycerol + H(+). It participates in phospholipid metabolism. Calcium-independent phospholipase. Calcium-independent and membrane-bound phospholipase, that catalyzes the esterolytic cleavage of fatty acids from glycerophospholipids to yield free fatty acids and lysophospholipids, hence regulating membrane physical properties and the release of lipid second messengers and growth factors. Hydrolyzes phosphatidylethanolamine, phosphatidylcholine and probably phosphatidylinositol with a possible preference for the former. Has also a broad substrate specificity in terms of fatty acid moieties, hydrolyzing saturated and mono-unsaturated fatty acids at nearly equal rates from either the sn-1 or sn-2 position in diacyl phosphatidylcholine. However, has a weak activity toward polyunsaturated fatty acids at the sn-2 position, and thereby favors the production of 2-arachidonoyl lysophosphatidylcholine, a key branch point metabolite in eicosanoid signaling. On the other hand, can produce arachidonic acid from the sn-1 position of diacyl phospholipid and from the sn-2 position of arachidonate-containing plasmalogen substrates. Therefore, plays an important role in the mobilization of arachidonic acid in response to cellular stimuli and the generation of lipid second messengers. Can also hydrolyze lysophosphatidylcholine. In the mitochondrial compartment, catalyzes the hydrolysis and release of oxidized aliphatic chains from cardiolipin and integrates mitochondrial bioenergetics and signaling. It is essential for maintaining efficient bioenergetic mitochondrial function through tailoring mitochondrial membrane lipid metabolism and composition. The protein is Calcium-independent phospholipase A2-gamma of Oryctolagus cuniculus (Rabbit).